The primary structure comprises 355 residues: Butyrate kinase 1 (355 aa).

This sequence belongs to the acetokinase family.

It localises to the cytoplasm. It catalyses the reaction butanoate + ATP = butanoyl phosphate + ADP. It participates in lipid metabolism; butanoate metabolism. Functionally, catalyzes the conversion of butyryl-CoA through butyryl phosphate to butyrate. This is Butyrate kinase 1 (buk1) from Clostridium acetobutylicum (strain ATCC 824 / DSM 792 / JCM 1419 / IAM 19013 / LMG 5710 / NBRC 13948 / NRRL B-527 / VKM B-1787 / 2291 / W).